The sequence spans 199 residues: NAD(P)H dehydrogenase (quinone) (199 aa).

A Flavodoxin-like domain is found at Val-4–Ile-190. FMN is bound by residues Ser-10 to Ile-15 and Thr-78 to Phe-80. Tyr-12 provides a ligand contact to NAD(+). Residue Trp-98 participates in substrate binding. FMN is bound by residues Ser-113–Gly-119 and His-134.

It belongs to the WrbA family. FMN is required as a cofactor.

It carries out the reaction a quinone + NADH + H(+) = a quinol + NAD(+). The catalysed reaction is a quinone + NADPH + H(+) = a quinol + NADP(+). The sequence is that of NAD(P)H dehydrogenase (quinone) from Bradyrhizobium sp. (strain ORS 278).